The chain runs to 596 residues: NADH-quinone oxidoreductase subunit C/D (596 aa).

The segment at 1 to 186 (MTDLTAQDAA…DPFELTKAKQ (186 aa)) is NADH dehydrogenase I subunit C. Residues 210–596 (DFMFLNLGPN…IDFVMSDVDR (387 aa)) are NADH dehydrogenase I subunit D.

It in the N-terminal section; belongs to the complex I 30 kDa subunit family. The protein in the C-terminal section; belongs to the complex I 49 kDa subunit family. In terms of assembly, NDH-1 is composed of 13 different subunits. Subunits NuoB, CD, E, F, and G constitute the peripheral sector of the complex.

The protein localises to the cell inner membrane. The catalysed reaction is a quinone + NADH + 5 H(+)(in) = a quinol + NAD(+) + 4 H(+)(out). Its function is as follows. NDH-1 shuttles electrons from NADH, via FMN and iron-sulfur (Fe-S) centers, to quinones in the respiratory chain. The immediate electron acceptor for the enzyme in this species is believed to be ubiquinone. Couples the redox reaction to proton translocation (for every two electrons transferred, four hydrogen ions are translocated across the cytoplasmic membrane), and thus conserves the redox energy in a proton gradient. This chain is NADH-quinone oxidoreductase subunit C/D, found in Salmonella choleraesuis (strain SC-B67).